A 349-amino-acid polypeptide reads, in one-letter code: MIDSNRKWSLIMKNTLHNLVKTELHCHLDGSLSFETIRELAEMANIALPESDSELAKLVTVPEDSETLLDYLKTFDFIRPLLQTQKALSLAAYDVAKQAAAEHVLYIEIRFAPELSMDKGLSAVQVVEAVEKGLQKAQRDFNIVAKVLICGMRQSSKQLTKEIFRQINQAKSLEFAGFDFAGNEHDFPPQEIADLIRFTQRLDRPMTFHAGECGCPSHIAQSIALGIKRLGHVTAIHDHPELIADFVENKVTAELCLTSNLQTKAAKSLAEFPYQELYEAGAKITINTDNRTVSNTNLTKEYQLFVDYFGTSLADFYHFNQNAIEASFASEAEKAELLAELKKAYGQTD.

2 residues coordinate Zn(2+): His-25 and His-27. Substrate-binding residues include His-27, Asp-29, and Gly-182. His-209 serves as a coordination point for Zn(2+). Catalysis depends on Glu-212, which acts as the Proton donor. Asp-289 serves as a coordination point for Zn(2+).

It belongs to the metallo-dependent hydrolases superfamily. Adenosine and AMP deaminases family. Adenosine deaminase subfamily. Zn(2+) is required as a cofactor.

It carries out the reaction adenosine + H2O + H(+) = inosine + NH4(+). The enzyme catalyses 2'-deoxyadenosine + H2O + H(+) = 2'-deoxyinosine + NH4(+). Functionally, catalyzes the hydrolytic deamination of adenosine and 2-deoxyadenosine. The chain is Adenosine deaminase from Streptococcus mutans serotype c (strain ATCC 700610 / UA159).